We begin with the raw amino-acid sequence, 230 residues long: Probable septum site-determining protein MinC (230 aa).

Belongs to the MinC family. In terms of assembly, interacts with MinD and FtsZ.

In terms of biological role, cell division inhibitor that blocks the formation of polar Z ring septums. Rapidly oscillates between the poles of the cell to destabilize FtsZ filaments that have formed before they mature into polar Z rings. Prevents FtsZ polymerization. The protein is Probable septum site-determining protein MinC of Rhodopseudomonas palustris (strain BisA53).